We begin with the raw amino-acid sequence, 1443 residues long: Cleavage and polyadenylation specificity factor subunit 1 (1443 aa).

Disordered regions lie at residues 404 to 435, 546 to 570, 715 to 777, and 901 to 921; these read PASA…AAGK, EEDN…DDGR, GGAR…PAPF, and FREK…AEEG. Residues 410–419 are compositionally biased toward basic and acidic residues; sequence EAADKEEPPS. A phosphoserine mark is found at S756 and S766. Residues 758 to 775 are compositionally biased toward basic and acidic residues; that stretch reads SKEEARRSSQPPADRDPA. The short motif at 893-908 is the Nuclear localization signal element; it reads KKVPHNINFREKKPKP.

It belongs to the CPSF1 family. In terms of assembly, component of the cleavage and polyadenylation specificity factor (CPSF) complex, composed of CPSF1, CPSF2, CPSF3, CPSF4 and FIP1L1. Found in a complex with CPSF1, FIP1L1 and PAPOLA. Interacts with FIP1L1, TENT2/GLD2 and SRRM1. Interacts with TUT1; the interaction is direct and mediates the recruitment of the CPSF complex on the 3'UTR of selected pre-mRNAs. In terms of processing, the N-terminus is blocked. As to expression, widely expressed, with high expression in the retina.

It is found in the nucleus. The protein localises to the nucleoplasm. Functionally, component of the cleavage and polyadenylation specificity factor (CPSF) complex that plays a key role in pre-mRNA 3'-end formation, recognizing the AAUAAA signal sequence and interacting with poly(A) polymerase and other factors to bring about cleavage and poly(A) addition. This subunit is involved in the RNA recognition step of the polyadenylation reaction. May play a role in eye morphogenesis and the development of retinal ganglion cell projections to the midbrain. The chain is Cleavage and polyadenylation specificity factor subunit 1 (CPSF1) from Homo sapiens (Human).